The sequence spans 221 residues: Ribosomal RNA small subunit methyltransferase G (221 aa).

S-adenosyl-L-methionine is bound by residues Gly-89, Leu-94, 140-141 (VE), and Arg-154.

Belongs to the methyltransferase superfamily. RNA methyltransferase RsmG family.

It is found in the cytoplasm. The catalysed reaction is guanosine(527) in 16S rRNA + S-adenosyl-L-methionine = N(7)-methylguanosine(527) in 16S rRNA + S-adenosyl-L-homocysteine. Specifically methylates the N7 position of guanine in position 527 of 16S rRNA. The polypeptide is Ribosomal RNA small subunit methyltransferase G (Methylibium petroleiphilum (strain ATCC BAA-1232 / LMG 22953 / PM1)).